Here is a 1027-residue protein sequence, read N- to C-terminus: MIRQCWAGLRLCRALYQTSYRWHGKSACERALRYSPGESIHGFTVNEVTPVPELFLTAVKLSHDNTGAKYLHVAREDSNNLFSVQFRTTPLDSTGVPHILEHTVLCGSQKYPCRDPFFKMLNRSLSTFMNAFTASDYTMYPFSTQNAKDFQNLLSVYLDAVFFPCLRELDFWQEGWRLEHENPEDPNSPLIFKGIVFNEMKGAFTDNEKVFSQHLQNKLLPDHTYSVVSGGEPLNIPDLTWEQLKEFHATHYHPSNARFFTYGNLPLEMHLKQIHEDALSKFGRIDPKTSVPPQERWQSPREYSISCGVDSFASDPEKQTMVSVNFLLSEITDSFEAFTLSLLSSLMVDGPNSPFYKALIEANLGTDFSPDTGFNNYTRETYFSIGLQGINKEDSEKVKHIINRTINEIAEQGIEPERIEALLHKLEIQMKHQSTSFGLTLASYIASCWNHEGDPVDLLKIGDKISRFRQCLKENPKFLQDKVKQYFQVNQHRMMLSMSPDEQHYDKEEQLEEEKLTQKVKALSEEERKQIYEKGLELISLQSKPQDFSCLPALKVSDIEPQIPLTDLEIAYAGDVPVQYCTQPTNGMVYFRAVSSLNTLPEELKPYVPLFCSVITKLGCGVYNYREQAQQMELTTGGMSVCPHIISDDSSLDTYEQGILFSSLCLDRNMPDMMHLWSEIFNSPHFDDEERLRVLVRMSAQEMSNGIPDSGHVYASIRASRTLTPTGELQELFSGMDQVKMIKRIAEMPDMGSILRKLSRIRKYVLLSDNMRCSINAAPQQMETASKEMEHFLTGITRSKKERKAIRPHVVEKSSNPSPSGSEISRTATRKLVGDPTFKPCQMKTHFCLSFPVNYIGECVRTVPYTHPDYASLRILARIMTAKFLHGEIREKGGAYGGGAKLSFDGIFGFYSYRDPNSLSTLSTFQKATDWAKSGQFSQQDVDEAKLSVFSAVDSPIAPSDKGMNHFLHGISDEMKQRHREELFAVTHSDLTNASNKYLTAGQCTRGTAILGPENKNIAKDPSWIIR.

The N-terminal 22 residues, 1 to 22 (MIRQCWAGLRLCRALYQTSYRW), are a transit peptide targeting the mitochondrion. His-98 contacts Zn(2+). Glu-101 serves as the catalytic Proton acceptor. The Zn(2+) site is built by His-102 and Glu-199. Cysteines 113 and 550 form a disulfide. Residues 803 to 827 (RKAIRPHVVEKSSNPSPSGSEISRT) form a disordered region. Low complexity predominate over residues 814–825 (SSNPSPSGSEIS).

Belongs to the peptidase M16 family. PreP subfamily. Monomer and homodimer; homodimerization is induced by binding of the substrate. Zn(2+) serves as cofactor. Post-translationally, a disulfide bond locks the enzyme in the closed conformation preventing substrate entry into the catalytic chamber.

It localises to the mitochondrion matrix. Mainly exists in a closed and catalytically competent conformation but a closed-to-open switch allows substrate entry into the catalytic chamber. Substrate binding induces closure and dimerization. A disulfide bond may lock the enzyme in a closed conformation preventing substrate entry into the catalytic chamber, participating in redox regulation of the enzyme. Inhibited by metal-chelating agents. Inhibited by nickel and zinc excess, and slightly activated by manganese. Functionally, metalloendopeptidase of the mitochondrial matrix that functions in peptide cleavage and degradation rather than in protein processing. Has an ATP-independent activity. Specifically cleaves peptides in the range of 5 to 65 residues. Shows a preference for cleavage after small polar residues and before basic residues, but without any positional preference. Degrades the transit peptides of mitochondrial proteins after their cleavage. Also degrades other unstructured peptides. The sequence is that of Presequence protease, mitochondrial (pitrm1) from Xenopus laevis (African clawed frog).